A 226-amino-acid chain; its full sequence is Urease accessory protein UreF (226 aa).

This sequence belongs to the UreF family. UreD, UreF and UreG form a complex that acts as a GTP-hydrolysis-dependent molecular chaperone, activating the urease apoprotein by helping to assemble the nickel containing metallocenter of UreC. The UreE protein probably delivers the nickel.

Its subcellular location is the cytoplasm. Its function is as follows. Required for maturation of urease via the functional incorporation of the urease nickel metallocenter. The protein is Urease accessory protein UreF of Janthinobacterium sp. (strain Marseille) (Minibacterium massiliensis).